A 134-amino-acid polypeptide reads, in one-letter code: Acyl carrier protein, chloroplastic (134 aa).

A chloroplast-targeting transit peptide spans 1 to 51; it reads MSTTFCSSVSMQATSLAATTRISFQKPALVSRTNLSFNLSRSIPTRLSVSC. One can recognise a Carrier domain in the interval 55-130; it reads PETVEKVSKI…EAAELIDELV (76 aa). Ser90 is subject to O-(pantetheine 4'-phosphoryl)serine.

The protein belongs to the acyl carrier protein (ACP) family. 4'-phosphopantetheine is transferred from CoA to a specific serine of apo-ACP by acpS. This modification is essential for activity because fatty acids are bound in thioester linkage to the sulfhydryl of the prosthetic group. Seed.

The protein localises to the plastid. Its subcellular location is the chloroplast. It functions in the pathway lipid metabolism; fatty acid biosynthesis. Carrier of the growing fatty acid chain in fatty acid biosynthesis. The chain is Acyl carrier protein, chloroplastic (ACL1.A1) from Brassica napus (Rape).